The chain runs to 1241 residues: uncharacterized protein (1241 aa).

The stretch at 21 to 49 (ILNDNVREINIAKKEIKQLREYVGILQQN) forms a coiled coil. Transmembrane regions (helical) follow at residues 261–281 (VNAIITGLLSRMMMVTNFVLG), 918–938 (AVVGMFFPIIGASIEVLGLVA), and 947–967 (GHIVNGSLELTLAGVATVIGG). The interval 1005-1028 (THIGKEDSNNGVSTSTNKRSIGKA) is disordered. The segment covering 1013–1028 (NNGVSTSTNKRSIGKA) has biased composition (polar residues).

It is found in the host membrane. This is an uncharacterized protein from Diadromus pulchellus (Parasitic wasp).